The sequence spans 60 residues: uncharacterized protein (60 aa).

This sequence to E.coli YjeQ and H.influenzae HI_1714.

This is an uncharacterized protein from Azotobacter vinelandii.